The following is a 519-amino-acid chain: MTKMTSIIGILMGVLTTATAASIPTGSSAAAAAALGSLGVSPPSGNVLIGNAGYTCSLLNRVLSKNETFTVTSPYYDVLIDEAWSENCRLNASCIVTPESAEEVSRLLQILSILETRFAIRSGGHNTNPGFSSIGSDGVLIALEKLDSISLSADRGTVTVGPGNKWESVYKYLQPYNLTALGGREAVVGVGGYILGETGGLSTFYNTHGLAIDSVTRFQVVLPNGTIVDATPTEHADLYKGLKGGLNNFGIVTEYDLTTNTGVDIYYEIKTYTTANTPAVLAAYATYLLDADINSNVEIQINPSYTLVFYGYLGHVSAPTDFDPFSDIPVASTMYPPTNGSLTELLLSIGSTGLTSEGVSYSGTFSFKVTGSTFLQDTYSTYLEAAASLPTGAVLSYVPQGVIPNLVTQGKSQNGGNLLGLDATPQVWANIFVQFPATLSQSEVAGSVDSLLANLISSAKSEDLFLPYIFVNDAGAKQKPLQSFGEKNIKYIDTVAKRYDPKRIMQRLQNQAYFVLEEL.

The first 20 residues, 1 to 20, serve as a signal peptide directing secretion; that stretch reads MTKMTSIIGILMGVLTTATA. The FAD-binding PCMH-type domain occupies 88-262; that stretch reads CRLNASCIVT…TEYDLTTNTG (175 aa). His-125 is subject to Pros-8alpha-FAD histidine.

Belongs to the oxygen-dependent FAD-linked oxidoreductase family.

It functions in the pathway secondary metabolite biosynthesis; terpenoid biosynthesis. Functionally, FAD-dependent monooxygenase; part of the gene cluster that mediates the biosynthesis of macrophorins, isoprenoid epoxycyclohexenones containing cyclized drimane moieties. The first step of the pathway is the synthesis of 6-methylsalicylic acid (6-MSA) by the polyketide synthase macA. 6-MSA is then converted to m-cresol by the decarboxylase macB. The cytochrome P450 monooxygenase macC then catalyzes the oxidation of m-cresol to toluquinol. Epoxidation of toluquinol is then performed by the short chain dehydrogenase macD, with the help of macE, and a further prenylation by macG leads to 7-deacetoxyyanuthone A. The next step is the hydroxylation of C-22 of 7-deacetoxyyanuthone A by the cytochrome P450 monooxygenase macH to yield 22-deacetylyanuthone A. O-Mevalon transferase macI then attaches mevalon to the hydroxyl group of 22-deacetylyanuthone A to produce yanuthone E. The terpene cyclase macJ catalyzes the cyclization of 22-deacetylyanuthone A to macrophorin A. MacJ is also able to catalyze cyclization of yanuthone E and 7-deacetoxyyanuthone A to their corresponding macrophorins. The macJ products can be further modified by macH and macJ, as well as by the FAD-dependent monooxygenase macF, to produce additional macrophorins, including 4'-oxomacrophorin A, 4'-oxomacrophorin D and 4'-oxomacrophorin E. In Penicillium terrestre, this protein is FAD-dependent monooxygenase macF.